The primary structure comprises 173 residues: Protein tyrosine phosphatase type IVA 3 (173 aa).

The region spanning 8–161 (APVEVSYKHM…YRPKQRLRFK (154 aa)) is the Tyrosine-protein phosphatase domain. Cysteine 49 and cysteine 104 are joined by a disulfide. The active-site Proton donor is the aspartate 72. Cysteine 104 acts as the Phosphocysteine intermediate in catalysis. Arginine 110 contacts substrate. Residue cysteine 170 is modified to Cysteine methyl ester. Cysteine 170 carries S-farnesyl cysteine lipidation. Residues 171-173 (CVM) constitute a propeptide, removed in mature form.

It belongs to the protein-tyrosine phosphatase family. As to quaternary structure, interacts with tubulin. Post-translationally, farnesylated. Farnesylation is required for membrane targeting. As to expression, mainly expressed in cardiomyocytes and skeletal muscle; also found in pancreas. Consistently overexpressed in colon cancer metastasis.

Its subcellular location is the cell membrane. It is found in the early endosome. The catalysed reaction is O-phospho-L-tyrosyl-[protein] + H2O = L-tyrosyl-[protein] + phosphate. Its activity is regulated as follows. Inhibited by sodium orthovanadate and peroxovanadium compounds, and by pentamidine. Functionally, protein tyrosine phosphatase which stimulates progression from G1 into S phase during mitosis. Enhances cell proliferation, cell motility and invasive activity, and promotes cancer metastasis. May be involved in the progression of cardiac hypertrophy by inhibiting intracellular calcium mobilization in response to angiotensin II. The sequence is that of Protein tyrosine phosphatase type IVA 3 (PTP4A3) from Homo sapiens (Human).